The following is a 419-amino-acid chain: Ribosome biogenesis protein WDR12 homolog (419 aa).

The ubiquitin-like (UBL) domain stretch occupies residues 10-91; the sequence is VQVHLKTKQE…EDAIEIEYVE (82 aa). 7 WD repeats span residues 103 to 141, 142 to 184, 191 to 230, 249 to 287, 289 to 328, 334 to 374, and 378 to 416; these read LHDD…LTIP, GHTA…NTVE, GHER…AGEG, GHRE…IKAE, STNK…GSVV, GHNA…APLY, and GHGE…VENM.

This sequence belongs to the WD repeat WDR12/YTM1 family.

The protein resides in the nucleus. The protein localises to the nucleolus. It is found in the nucleoplasm. Functionally, required for maturation of ribosomal RNAs and formation of the large ribosomal subunit. This Drosophila pseudoobscura pseudoobscura (Fruit fly) protein is Ribosome biogenesis protein WDR12 homolog.